The sequence spans 231 residues: 7-cyano-7-deazaguanine synthase (231 aa).

8 to 18 is an ATP binding site; the sequence is FSGGQDSTTCL. Positions 188, 197, 200, and 203 each coordinate Zn(2+).

Belongs to the QueC family. Zn(2+) is required as a cofactor.

The enzyme catalyses 7-carboxy-7-deazaguanine + NH4(+) + ATP = 7-cyano-7-deazaguanine + ADP + phosphate + H2O + H(+). The protein operates within purine metabolism; 7-cyano-7-deazaguanine biosynthesis. Functionally, catalyzes the ATP-dependent conversion of 7-carboxy-7-deazaguanine (CDG) to 7-cyano-7-deazaguanine (preQ(0)). The chain is 7-cyano-7-deazaguanine synthase from Escherichia coli O1:K1 / APEC.